A 261-amino-acid polypeptide reads, in one-letter code: Glutamate 5-kinase (261 aa).

K7 serves as a coordination point for ATP. The substrate site is built by S46, D131, and N147. Residues 167–168 (SD) and 209–215 (TGGIVTK) contribute to the ATP site.

The protein belongs to the glutamate 5-kinase family.

The protein localises to the cytoplasm. It catalyses the reaction L-glutamate + ATP = L-glutamyl 5-phosphate + ADP. The protein operates within amino-acid biosynthesis; L-proline biosynthesis; L-glutamate 5-semialdehyde from L-glutamate: step 1/2. Functionally, catalyzes the transfer of a phosphate group to glutamate to form L-glutamate 5-phosphate. This is Glutamate 5-kinase from Wolinella succinogenes (strain ATCC 29543 / DSM 1740 / CCUG 13145 / JCM 31913 / LMG 7466 / NCTC 11488 / FDC 602W) (Vibrio succinogenes).